Here is a 187-residue protein sequence, read N- to C-terminus: Putative adenylate kinase (187 aa).

Positions 10, 12, 13, 14, and 15 each coordinate ATP. The NMP stretch occupies residues 30-53 (SLSQFVIENKLYTEYDELRQSYII). Residues 103-113 (GRGWADIKVAE) are LID. R104 is an ATP binding site.

This sequence belongs to the adenylate kinase family. AK6 subfamily. Interacts with uS11. Not a structural component of 40S pre-ribosomes, but transiently interacts with them by binding to uS11.

The catalysed reaction is AMP + ATP = 2 ADP. It carries out the reaction ATP + H2O = ADP + phosphate + H(+). Functionally, broad-specificity nucleoside monophosphate (NMP) kinase that catalyzes the reversible transfer of the terminal phosphate group between nucleoside triphosphates and monophosphates. Also has ATPase activity. Involved in the late maturation steps of the 30S ribosomal particles, specifically 16S rRNA maturation. While NMP activity is not required for ribosome maturation, ATPase activity is. Associates transiently with small ribosomal subunit protein uS11. ATP hydrolysis breaks the interaction with uS11. May temporarily remove uS11 from the ribosome to enable a conformational change of the ribosomal RNA that is needed for the final maturation step of the small ribosomal subunit. The polypeptide is Putative adenylate kinase (Saccharolobus islandicus (strain L.S.2.15 / Lassen #1) (Sulfolobus islandicus)).